The primary structure comprises 740 residues: MYIVSSKKVSRAPLHVASLCVTLHRLKCDRNQPCSTCSHRGLSFSCTYVASAANSVRKADQSRPSPRPAAGIQDRITQLEGLVLTLMHSVNHKPAPSTGAPESASVLDADLPASFGRISLENDETRYVSGDHWISILDGIAELKDHFEDDNLNAGASPAAGAATAEYQGPKLLFGCHSPTTRESILASLPQRPVTDRLVSKYFNSMDMASSIIHGPTFIREYETFWLAPSETPIMWIGLLFAVIALGTHFQQRETHFIHPSPQRHSVLEAYKDKVIECLVLGKYTKVGPYAIETLMLYFSLEHLPAADTRVDNWILVGIIVRLAMRVGYHRDPSHTPQIKPFQAEMRRRHWATIVQLDLMTSTQVGLPRMVNEAVCDTVEPRNLLDQDFDDQVVDLPPSRPDSDMTSILYLNARNKLMTVFGMITDLTTSTFPTSYRHVMRLDRTLHNTVAAIPSGLQLKALSQSITEPSETILRRIYLDMTFHKARCILHRKYLTAAQVNASYIYSRTSCIDAAVRILQHQDVLFRECQPGGLLHSGNWKITSVLNHDFLLAITILSLDLNGAMELASKSQLIETPMEQQRRENIIRSLNRSYNIWLQSANTSREARKAAEVLRIVLAKAQNSSISTPSHDQDDLDGEAATEATESEYMNSPLTLQPFLACDPGASTAIGTNICTTLDVASPSDYMEDLNDNVTSGVDFDWDNWDSHFRGQNTPNMSTMDLRFPNLDYPTDGRGSDGCI.

The zn(2)-C6 fungal-type DNA-binding region spans 25–46; sequence RLKCDRNQPCSTCSHRGLSFSC. The disordered stretch occupies residues 625–645; it reads SISTPSHDQDDLDGEAATEAT.

The protein localises to the nucleus. Its function is as follows. Transcription factor; part of the gene cluster that mediates the biosynthesis of macrophasetins, 3-decalinoyltetramic acids (DTAs) which feature a tetramate (pyrrolidine-2,4-dione) unit connected to a decalin fragment and that have potent bioactivities. The sequence is that of Zn(2)-C6 fungal-type transcription factor mpsB from Macrophomina phaseolina (strain MS6) (Charcoal rot fungus).